A 384-amino-acid chain; its full sequence is Outer membrane protein assembly factor BamC (384 aa).

The N-terminal stretch at 1–23 (MNKLNSVVVARGAVAVLLIGLAG) is a signal peptide. A lipid anchor (N-palmitoyl cysteine) is attached at Cys24. A lipid anchor (S-diacylglycerol cysteine) is attached at Cys24. 2 disordered regions span residues 47–70 (LEVPPDLTSPTRDDRYAVPDTSGK) and 251–273 (QAAQEKPLERAKMTRGPDGSGTL).

The protein belongs to the BamC family. As to quaternary structure, part of the Bam complex.

It localises to the cell outer membrane. Functionally, part of the outer membrane protein assembly complex, which is involved in assembly and insertion of beta-barrel proteins into the outer membrane. This is Outer membrane protein assembly factor BamC from Accumulibacter regalis.